Here is a 239-residue protein sequence, read N- to C-terminus: Ribosomal RNA small subunit methyltransferase G (239 aa).

S-adenosyl-L-methionine contacts are provided by residues glycine 77, phenylalanine 82, 128–129, and arginine 147; that span reads AE. Positions 219 to 239 are disordered; it reads KNTPKKYPRKPGTPNKSPIEG.

The protein belongs to the methyltransferase superfamily. RNA methyltransferase RsmG family.

It is found in the cytoplasm. Specifically methylates the N7 position of guanine in position 535 of 16S rRNA. The sequence is that of Ribosomal RNA small subunit methyltransferase G from Bacillus subtilis (strain 168).